Consider the following 554-residue polypeptide: ATP synthase subunit alpha (554 aa).

Residue 173–180 (GDRQTGKT) participates in ATP binding. Positions 531-554 (SHLAAEKVRKHVPPSKPTTQRTAG) are disordered.

It belongs to the ATPase alpha/beta chains family. F-type ATPases have 2 components, CF(1) - the catalytic core - and CF(0) - the membrane proton channel. CF(1) has five subunits: alpha(3), beta(3), gamma(1), delta(1), epsilon(1). CF(0) has three main subunits: a(1), b(2) and c(9-12). The alpha and beta chains form an alternating ring which encloses part of the gamma chain. CF(1) is attached to CF(0) by a central stalk formed by the gamma and epsilon chains, while a peripheral stalk is formed by the delta and b chains.

The protein localises to the cell membrane. The enzyme catalyses ATP + H2O + 4 H(+)(in) = ADP + phosphate + 5 H(+)(out). In terms of biological role, produces ATP from ADP in the presence of a proton gradient across the membrane. The alpha chain is a regulatory subunit. This is ATP synthase subunit alpha from Acidothermus cellulolyticus (strain ATCC 43068 / DSM 8971 / 11B).